Consider the following 429-residue polypeptide: Enolase (429 aa).

Gln167 contributes to the (2R)-2-phosphoglycerate binding site. Residue Glu209 is the Proton donor of the active site. Mg(2+)-binding residues include Asp246, Glu289, and Asp316. Lys341, Arg370, Ser371, and Lys392 together coordinate (2R)-2-phosphoglycerate. Lys341 serves as the catalytic Proton acceptor.

This sequence belongs to the enolase family. As to quaternary structure, component of the RNA degradosome, a multiprotein complex involved in RNA processing and mRNA degradation. Mg(2+) serves as cofactor.

It is found in the cytoplasm. The protein localises to the secreted. The protein resides in the cell surface. The catalysed reaction is (2R)-2-phosphoglycerate = phosphoenolpyruvate + H2O. The protein operates within carbohydrate degradation; glycolysis; pyruvate from D-glyceraldehyde 3-phosphate: step 4/5. Catalyzes the reversible conversion of 2-phosphoglycerate (2-PG) into phosphoenolpyruvate (PEP). It is essential for the degradation of carbohydrates via glycolysis. The sequence is that of Enolase from Pseudomonas entomophila (strain L48).